We begin with the raw amino-acid sequence, 489 residues long: Cytochrome P450 71A26 (489 aa).

Residues 1–21 (MMIMFFLLCSIIFVVTIIIFR) traverse the membrane as a helical segment. C431 provides a ligand contact to heme.

The protein belongs to the cytochrome P450 family. Heme serves as cofactor.

It localises to the membrane. This chain is Cytochrome P450 71A26 (CYP71A26), found in Arabidopsis thaliana (Mouse-ear cress).